Reading from the N-terminus, the 340-residue chain is Guanine nucleotide-binding protein G(I)/G(S)/G(T) subunit beta-1 (340 aa).

WD repeat units lie at residues 53-83, 95-125, 141-170, 182-212, 224-254, 268-298, and 310-340; these read GHLAKIYAMHWGSDSRNLVSASQDGKLIVWD, LRSSWVMTCAYAPSGSYVACGGLDNICSIYS, GHTGYLSCCRFVDDNQIVTSSGDMTCALWD, GHTGDVMSLSLSPNMRTFTSGACDASAKLWD, GHESDINAVTFFPNGHAFATGSDDATCRLFD, NIICGITSVAFSKSGKLLLAGYDDFNCNVWD, and GHDNRVSCLGVTEDGMAVATGSWDSFLKIWN.

This sequence belongs to the WD repeat G protein beta family. As to quaternary structure, g proteins are composed of 3 units, alpha, beta and gamma.

Guanine nucleotide-binding proteins (G proteins) are involved as a modulator or transducer in various transmembrane signaling systems. The beta and gamma chains are required for the GTPase activity, for replacement of GDP by GTP, and for G protein-effector interaction. This Homarus americanus (American lobster) protein is Guanine nucleotide-binding protein G(I)/G(S)/G(T) subunit beta-1 (GBETA1).